A 498-amino-acid polypeptide reads, in one-letter code: Lysine--tRNA ligase (498 aa).

Glu-407 and Glu-414 together coordinate Mg(2+).

The protein belongs to the class-II aminoacyl-tRNA synthetase family. Homodimer. Requires Mg(2+) as cofactor.

Its subcellular location is the cytoplasm. The catalysed reaction is tRNA(Lys) + L-lysine + ATP = L-lysyl-tRNA(Lys) + AMP + diphosphate. This is Lysine--tRNA ligase (lysS) from Rhizobium meliloti (strain 1021) (Ensifer meliloti).